We begin with the raw amino-acid sequence, 813 residues long: MRPRPEGALRAGAALSPVLLFLLLLPLLGHLWAASTPAPSSLSPGAQEDNQLGAGRVKRGWVWNQFFVVEEYTGTEPLYVGKIHSDSDEGDGTIKYTISGEGAGTIFLIDELTGDIHATERLDREQKTFYTLRAQARDRATNRLLEPESEFIIKVQDINDSEPRFLHGPYIGSVAELSPTGTSVMQVMASDADDPTYGSSARLVYSVLDGEHHFTVDPKTGVIRTAVPDLDRESQERYEVVIQATDMAGQLGGLSGSTTVTIVVTDVNDNPPRFPQKMYQFSIQESAPIGTAVGRVKAEDSDVGENTDMTYHLREESGSGGDAFKVTTDSDTQEAIIVVQKHLDFESQQVHTVVLEALNKFVDPRFADLGTFRDQAIVRVAVTDVDEPPEFRPPSGLLEVQEDAQVGSLVGVVTARDPDAANRPVRYAIDRDSDLEQIFDIDADTGAIVTGKGLDRETAGWHNITVLAMEADNHAQLSRASLRIRILDVNDNPPELATPYEAAVCEDAKPGQLIQTISVVDRDEPQGGHRFYFRLVPEAPSNPHFSLLDIEDNTAAVHTQHVGFNRQEQDVFLLPILVVDSGPPTLSSTGTLTIRICGCDSSGTIQSCNTTAFVMAASLSPGALIALLVCVLILVVLALLILTLRRHHKSHLSSDVDEDMRDNVIKYNDEGGGEQDTEAYDMSALRSLYDFGELKGGDPGGGAASPPQAASSSERHSLPRGPSSPEPDFSVFRDFISRKVALADADLSVPPYDAFQTYAFEGAGSPAASLSSLHSGSTGSEQDFAFLRAWGPRFRPLAALYAGHRGDDEAPAS.

Positions 1-33 are cleaved as a signal peptide; the sequence is MRPRPEGALRAGAALSPVLLFLLLLPLLGHLWA. The Extracellular segment spans residues 34 to 621; it reads ASTPAPSSLS…AFVMAASLSP (588 aa). Cadherin domains lie at 61–165, 166–274, 275–391, 392–495, and 496–613; these read WVWN…EPRF, LHGP…PPRF, PQKM…PPEF, RPPS…NPPE, and LATP…TTAF. N-linked (GlcNAc...) asparagine glycosylation is present at asparagine 159. 2 N-linked (GlcNAc...) asparagine glycosylation sites follow: asparagine 463 and asparagine 609. A helical membrane pass occupies residues 622–642; sequence GALIALLVCVLILVVLALLIL. Topologically, residues 643-813 are cytoplasmic; that stretch reads TLRRHHKSHL…HRGDDEAPAS (171 aa). A disordered region spans residues 696–726; it reads GGDPGGGAASPPQAASSSERHSLPRGPSSPE.

In terms of tissue distribution, predominantly expressed in brain. Abundant in olfactory bulb, cerebrum, and cerebellum, less in pons, medulla, and spinal cord. Low expression in heart. No expression in lung, liver, spleen, kidney, testis, stomach, intestine, colon, and placenta.

It localises to the cell membrane. Cadherins are calcium-dependent cell adhesion proteins. They preferentially interact with themselves in a homophilic manner in connecting cells; cadherins may thus contribute to the sorting of heterogeneous cell types. PB-cadherins may have a role in the morphological organization of pituitary gland and brain tissues. The polypeptide is Cadherin-22 (Cdh22) (Mus musculus (Mouse)).